Here is a 100-residue protein sequence, read N- to C-terminus: Urease subunit gamma (100 aa).

It belongs to the urease gamma subunit family. In terms of assembly, heterotrimer of UreA (gamma), UreB (beta) and UreC (alpha) subunits. Three heterotrimers associate to form the active enzyme.

The protein localises to the cytoplasm. The catalysed reaction is urea + 2 H2O + H(+) = hydrogencarbonate + 2 NH4(+). The protein operates within nitrogen metabolism; urea degradation; CO(2) and NH(3) from urea (urease route): step 1/1. This chain is Urease subunit gamma, found in Burkholderia mallei (strain NCTC 10247).